The sequence spans 54 residues: Metallothionein-2 (54 aa).

This sequence belongs to the metallothionein superfamily. Type 11 family.

The sequence is that of Metallothionein-2 (MTP2) from Yarrowia lipolytica (strain CLIB 122 / E 150) (Yeast).